A 478-amino-acid chain; its full sequence is Glycogen synthase (478 aa).

ADP-alpha-D-glucose is bound at residue lysine 16.

It belongs to the glycosyltransferase 1 family. Bacterial/plant glycogen synthase subfamily.

The enzyme catalyses [(1-&gt;4)-alpha-D-glucosyl](n) + ADP-alpha-D-glucose = [(1-&gt;4)-alpha-D-glucosyl](n+1) + ADP + H(+). It functions in the pathway glycan biosynthesis; glycogen biosynthesis. In terms of biological role, synthesizes alpha-1,4-glucan chains using ADP-glucose. This Lachnospira eligens (strain ATCC 27750 / DSM 3376 / VPI C15-48 / C15-B4) (Eubacterium eligens) protein is Glycogen synthase.